The primary structure comprises 488 residues: L-amino oxidase (488 aa).

FAD is bound by residues 60 to 61, 80 to 81, R88, and 104 to 107; these read MS, EA, and GPMR. Residues R107 and Y388 each contribute to the substrate site. Cysteines 347 and 428 form a disulfide. FAD contacts are provided by residues E474 and 481–486; that span reads GWIDST. 481 to 482 lines the substrate pocket; the sequence is GW.

It belongs to the flavin monoamine oxidase family. FIG1 subfamily. In terms of assembly, monomer. This is in contrast with most of its orthologs, that are non-covalently linked homodimers. Requires FAD as cofactor. N-glycosylated. In terms of tissue distribution, expressed by the venom gland.

Its subcellular location is the secreted. The catalysed reaction is an L-alpha-amino acid + O2 + H2O = a 2-oxocarboxylate + H2O2 + NH4(+). It carries out the reaction L-leucine + O2 + H2O = 4-methyl-2-oxopentanoate + H2O2 + NH4(+). Its function is as follows. Catalyzes an oxidative deamination of predominantly hydrophobic and aromatic L-amino acids, thus producing hydrogen peroxide that may contribute to the diverse toxic effects of this enzyme. Shows activity on L-Leu. Exhibits diverse biological activities, such as hemorrhage, hemolysis, edema, antibacterial and antiparasitic activities, as well as regulation of platelet aggregation. When tested on SW480 and SW620 human colon cancer cells, shows inhibition of cell proliferation, and induction of apoptosis, which is probably a consequence of the increased caspase-3 activity and the decreased Bcl-2 expression. The sequence is that of L-amino oxidase from Trimeresurus purpureomaculatus (Mangrove pit viper).